We begin with the raw amino-acid sequence, 203 residues long: Recombination protein RecR (203 aa).

The C4-type zinc finger occupies 58-73 (CDYCGNLDIVSICNIC). Residues 81-177 (STIAVVESVA…KISKLASGIP (97 aa)) enclose the Toprim domain.

This sequence belongs to the RecR family.

In terms of biological role, may play a role in DNA repair. It seems to be involved in an RecBC-independent recombinational process of DNA repair. It may act with RecF and RecO. The chain is Recombination protein RecR from Orientia tsutsugamushi (strain Ikeda) (Rickettsia tsutsugamushi).